The primary structure comprises 427 residues: Trigger factor (427 aa).

In terms of domain architecture, PPIase FKBP-type spans 163–248 (GDTVVIDFVG…VHEVKSKEVP (86 aa)).

This sequence belongs to the FKBP-type PPIase family. Tig subfamily.

It is found in the cytoplasm. The catalysed reaction is [protein]-peptidylproline (omega=180) = [protein]-peptidylproline (omega=0). In terms of biological role, involved in protein export. Acts as a chaperone by maintaining the newly synthesized protein in an open conformation. Functions as a peptidyl-prolyl cis-trans isomerase. This chain is Trigger factor, found in Streptococcus uberis (strain ATCC BAA-854 / 0140J).